The primary structure comprises 198 residues: uncharacterized protein (198 aa).

Disordered stretches follow at residues Arg15–Arg69 and Phe172–Leu198. Composition is skewed to basic and acidic residues over residues His37–Arg49 and Phe56–Arg69. Residues Glu176–Asp186 are compositionally biased toward low complexity. The span at Ala187–Leu198 shows a compositional bias: acidic residues.

It localises to the nucleus. This is an uncharacterized protein from Schizosaccharomyces pombe (strain 972 / ATCC 24843) (Fission yeast).